Here is a 225-residue protein sequence, read N- to C-terminus: Insulin-induced gene 2 protein (225 aa).

The Cytoplasmic portion of the chain corresponds to 1-28 (MAEGETKSPGPKKCGPYISSVTSQSVNL). The chain crosses the membrane as a helical span at residues 29–51 (MIRGVVLFFIGVFLALVLNLLQI). Over 52–70 (QRNVTLFPPDVIASIFSSA) the chain is Lumenal. The helical transmembrane segment at 71 to 88 (WWVPPCCGTASAVIGLLY) threads the bilayer. Residues 89–103 (PCIDRHLGEPHKFKR) are Cytoplasmic-facing. A helical membrane pass occupies residues 104–126 (EWSSVMRCVAVFVGINHASAKVD). Residues 127–129 (FDN) lie on the Lumenal side of the membrane. The helical transmembrane segment at 130 to 148 (NIQLSLTLAALSIGLWWTF) threads the bilayer. The Cytoplasmic portion of the chain corresponds to 149–153 (DRSRS). S151 is modified (phosphoserine). A helical transmembrane segment spans residues 154–175 (GFGLGVGIAFLATVVTQLLVYN). Topologically, residues 176-189 (GVYQYTSPDFLYVR) are lumenal. The chain crosses the membrane as a helical span at residues 190-207 (SWLPCIFFAGGITMGNIG). The Cytoplasmic portion of the chain corresponds to 208–225 (RQLAMYECKVIAEKSHQE). C215 carries the cysteine sulfenic acid (-SOH); alternate modification. A Glycyl cysteine thioester (Cys-Gly) (interchain with G-Cter in ubiquitin); alternate cross-link involves residue C215. The KxHxx signature appears at 219 to 225 (AEKSHQE).

Belongs to the INSIG family. In terms of assembly, interacts with SCAP; interaction is direct and only takes place in the presence of sterols; it prevents interaction between SCAP and the coat protein complex II (COPII). Associates with the SCAP-SREBP complex (composed of SCAP and SREBF1/SREBP1 or SREBF2/SREBP2); association is mediated via its interaction with SCAP and only takes place in the presence of sterols. Interacts with RNF139. Interacts with RNF145. Phosphorylation at Ser-151 by PCK1 reduces binding to oxysterol, disrupting the interaction between INSIG2 and SCAP, thereby promoting nuclear translocation of SREBP proteins (SREBF1/SREBP1 or SREBF2/SREBP2) and subsequent transcription of downstream lipogenesis-related genes. Post-translationally, polyubiquitinated by AMFR/gp78 at Cys-215 in some tissues such as adipose tissues, undifferentiated myoblasts and liver, leading to its degradation. In differentiated myotubes, Cys-215 oxidation prevents ubiquitination at the same site, resulting in protein stabilization. In terms of processing, oxidized at Cys-215 in differentiated myotubes, preventing ubiquitination at the same site, and resulting in protein stabilization.

The protein resides in the endoplasmic reticulum membrane. Functionally, oxysterol-binding protein that mediates feedback control of cholesterol synthesis by controlling both endoplasmic reticulum to Golgi transport of SCAP and degradation of HMGCR. Acts as a negative regulator of cholesterol biosynthesis by mediating the retention of the SCAP-SREBP complex in the endoplasmic reticulum, thereby blocking the processing of sterol regulatory element-binding proteins (SREBPs) SREBF1/SREBP1 and SREBF2/SREBP2. Binds oxysterol, including 22-hydroxycholesterol, 24-hydroxycholesterol, 25-hydroxycholesterol and 27-hydroxycholesterol, regulating interaction with SCAP and retention of the SCAP-SREBP complex in the endoplasmic reticulum. In presence of oxysterol, interacts with SCAP, retaining the SCAP-SREBP complex in the endoplasmic reticulum, thereby preventing SCAP from escorting SREBF1/SREBP1 and SREBF2/SREBP2 to the Golgi. Sterol deprivation or phosphorylation by PCK1 reduce oxysterol-binding, disrupting the interaction between INSIG2 and SCAP, thereby promoting Golgi transport of the SCAP-SREBP complex, followed by processing and nuclear translocation of SREBF1/SREBP1 and SREBF2/SREBP2. Also regulates cholesterol synthesis by regulating degradation of HMGCR: initiates the sterol-mediated ubiquitin-mediated endoplasmic reticulum-associated degradation (ERAD) of HMGCR via recruitment of the reductase to the ubiquitin ligase RNF139. The chain is Insulin-induced gene 2 protein from Pongo abelii (Sumatran orangutan).